The chain runs to 273 residues: NADPH-dependent 7-cyano-7-deazaguanine reductase (273 aa).

80 to 82 contacts substrate; it reads VES. 82–83 is an NADPH binding site; that stretch reads SK. Cysteine 180 functions as the Thioimide intermediate in the catalytic mechanism. Residue aspartate 187 is the Proton donor of the active site. 219 to 220 serves as a coordination point for substrate; that stretch reads HE. Residue 248-249 participates in NADPH binding; it reads RG.

This sequence belongs to the GTP cyclohydrolase I family. QueF type 2 subfamily. As to quaternary structure, homodimer.

Its subcellular location is the cytoplasm. The catalysed reaction is 7-aminomethyl-7-carbaguanine + 2 NADP(+) = 7-cyano-7-deazaguanine + 2 NADPH + 3 H(+). It participates in tRNA modification; tRNA-queuosine biosynthesis. Its function is as follows. Catalyzes the NADPH-dependent reduction of 7-cyano-7-deazaguanine (preQ0) to 7-aminomethyl-7-deazaguanine (preQ1). The protein is NADPH-dependent 7-cyano-7-deazaguanine reductase of Bordetella parapertussis (strain 12822 / ATCC BAA-587 / NCTC 13253).